We begin with the raw amino-acid sequence, 213 residues long: Thiopurine S-methyltransferase (213 aa).

Residues Trp-10, Leu-45, Glu-66, and Arg-121 each contribute to the S-adenosyl-L-methionine site.

The protein belongs to the class I-like SAM-binding methyltransferase superfamily. TPMT family.

The protein localises to the cytoplasm. It catalyses the reaction S-adenosyl-L-methionine + a thiopurine = S-adenosyl-L-homocysteine + a thiopurine S-methylether.. In Aliivibrio salmonicida (strain LFI1238) (Vibrio salmonicida (strain LFI1238)), this protein is Thiopurine S-methyltransferase.